The chain runs to 249 residues: ATP synthase subunit a, chloroplastic (249 aa).

Transmembrane regions (helical) follow at residues 40-60 (QVLITSWVVIAILLGSAVLAI), 97-117 (VPFIGTLFLFIFVSNWSGALL), 136-156 (INTTVALALLTSVAYFYAGLS), 201-221 (LVVVVLVSLVPLVVPIPVMFL), and 222-242 (GLFTSGIQALIFATLAAAYIG).

Belongs to the ATPase A chain family. In terms of assembly, F-type ATPases have 2 components, CF(1) - the catalytic core - and CF(0) - the membrane proton channel. CF(1) has five subunits: alpha(3), beta(3), gamma(1), delta(1), epsilon(1). CF(0) has four main subunits: a, b, b' and c.

It localises to the plastid. It is found in the chloroplast thylakoid membrane. In terms of biological role, key component of the proton channel; it plays a direct role in the translocation of protons across the membrane. This is ATP synthase subunit a, chloroplastic from Lepidium virginicum (Virginia pepperweed).